The primary structure comprises 790 residues: Cadherin-6 (790 aa).

The N-terminal stretch at 1 to 18 is a signal peptide; sequence MRTYRYFLLLFWVGQPYP. The propeptide occupies 19–53; it reads TFSNPLSKRTSGFPAKRKALELSANSRNELSRSKR. 5 Cadherin domains span residues 54–159, 160–268, 269–383, 384–486, and 487–608; these read SWMW…EPIF, TKDV…PPRF, PQST…PPVF, SKLA…DNAP, and EFAE…LIHP. Residues 54 to 615 lie on the Extracellular side of the membrane; that stretch reads SWMWNQFFLL…IHPTGLSTGA (562 aa). N255 is a glycosylation site (N-linked (GlcNAc...) asparagine). The interval 260–291 is disordered; the sequence is DVNDNPPRFPQSTYQFKTPESSPPGTPIGRIK. The segment covering 269-279 has biased composition (polar residues); sequence PQSTYQFKTPE. Residues N399, N437, N455, and N536 are each glycosylated (N-linked (GlcNAc...) asparagine). The chain crosses the membrane as a helical span at residues 616–636; it reads LVAILLCIVILLVTVVLFAAL. Residues 637–790 lie on the Cytoplasmic side of the membrane; sequence RRQRKKEPLI…YGGMDSDKDS (154 aa). Phosphoserine occurs at positions 786 and 790.

The protein resides in the cell membrane. Its function is as follows. Cadherins are calcium-dependent cell adhesion proteins. They preferentially interact with themselves in a homophilic manner in connecting cells; cadherins may thus contribute to the sorting of heterogeneous cell types. In Mus musculus (Mouse), this protein is Cadherin-6 (Cdh6).